The chain runs to 388 residues: Succinate--CoA ligase [ADP-forming] subunit beta (388 aa).

The 236-residue stretch at 9 to 244 (KQLFAEYGLP…PSQDDPREAH (236 aa)) folds into the ATP-grasp domain. ATP contacts are provided by residues lysine 46, 53–55 (GRG), glutamate 99, threonine 102, and glutamate 107. Residues asparagine 199 and aspartate 213 each coordinate Mg(2+). Substrate contacts are provided by residues asparagine 264 and 321-323 (GIV).

It belongs to the succinate/malate CoA ligase beta subunit family. As to quaternary structure, heterotetramer of two alpha and two beta subunits. Requires Mg(2+) as cofactor.

The enzyme catalyses succinate + ATP + CoA = succinyl-CoA + ADP + phosphate. It carries out the reaction GTP + succinate + CoA = succinyl-CoA + GDP + phosphate. The protein operates within carbohydrate metabolism; tricarboxylic acid cycle; succinate from succinyl-CoA (ligase route): step 1/1. Functionally, succinyl-CoA synthetase functions in the citric acid cycle (TCA), coupling the hydrolysis of succinyl-CoA to the synthesis of either ATP or GTP and thus represents the only step of substrate-level phosphorylation in the TCA. The beta subunit provides nucleotide specificity of the enzyme and binds the substrate succinate, while the binding sites for coenzyme A and phosphate are found in the alpha subunit. In Pseudomonas putida (strain GB-1), this protein is Succinate--CoA ligase [ADP-forming] subunit beta.